We begin with the raw amino-acid sequence, 636 residues long: Chaperone protein HtpG (636 aa).

The a; substrate-binding stretch occupies residues 1–342 (MSGETLEFQA…AHDLSLNISR (342 aa)). Positions 343 to 558 (ELLQQDRQIQ…AHDVTPTLEK (216 aa)) are b. The interval 559-636 (MYRAMGHEVP…ILAERLARTL (78 aa)) is c.

It belongs to the heat shock protein 90 family. Homodimer.

The protein resides in the cytoplasm. Molecular chaperone. Has ATPase activity. In Salinispora arenicola (strain CNS-205), this protein is Chaperone protein HtpG.